A 514-amino-acid chain; its full sequence is ATP synthase subunit alpha (514 aa).

An ATP-binding site is contributed by 170 to 177 (GDRQTGKT).

The protein belongs to the ATPase alpha/beta chains family. F-type ATPases have 2 components, CF(1) - the catalytic core - and CF(0) - the membrane proton channel. CF(1) has five subunits: alpha(3), beta(3), gamma(1), delta(1), epsilon(1). CF(0) has three main subunits: a(1), b(2) and c(9-12). The alpha and beta chains form an alternating ring which encloses part of the gamma chain. CF(1) is attached to CF(0) by a central stalk formed by the gamma and epsilon chains, while a peripheral stalk is formed by the delta and b chains.

The protein localises to the cell inner membrane. It carries out the reaction ATP + H2O + 4 H(+)(in) = ADP + phosphate + 5 H(+)(out). Produces ATP from ADP in the presence of a proton gradient across the membrane. The alpha chain is a regulatory subunit. In Psychrobacter cryohalolentis (strain ATCC BAA-1226 / DSM 17306 / VKM B-2378 / K5), this protein is ATP synthase subunit alpha.